Reading from the N-terminus, the 461-residue chain is Phosphatidate cytidylyltransferase 1 (461 aa).

The disordered stretch occupies residues M1–T68. R7 is subject to Omega-N-methylarginine. A compositionally biased stretch (basic and acidic residues) spans R22–S56. Residues S35 and S37 each carry the phosphoserine modification. 6 consecutive transmembrane segments (helical) span residues M96–L116, F149–F169, H183–V203, L230–I250, G279–S299, and I357–F377.

This sequence belongs to the CDS family. In terms of assembly, homodimer. Interacts with FOS; this interaction may enhance catalytic activity. Requires Mg(2+) as cofactor. Brain, retina and testis. Found in cerebellar Purkinje cells, pineal body, inner segment of photoreceptor cells and postmitotic spermatocytes and spermatids.

It localises to the endoplasmic reticulum membrane. The catalysed reaction is a 1,2-diacyl-sn-glycero-3-phosphate + CTP + H(+) = a CDP-1,2-diacyl-sn-glycerol + diphosphate. The enzyme catalyses 1-octadecanoyl-2-(5Z,8Z,11Z,14Z-eicosatetraenoyl)-sn-glycero-3-phosphate + CTP + H(+) = 1-octadecanoyl-2-(5Z,8Z,11Z,14Z-eicosatetraenoyl)-sn-glycero-3-cytidine-5'-diphosphate + diphosphate. It catalyses the reaction 1-octadecanoyl-2-(9Z,12Z-octadecadienoyl)-sn-glycero-3-phosphate + CTP + H(+) = 1-octadecanoyl-2-(9Z,12Z-octadecadienoyl)-sn-glycero-3-cytidine-5'-diphosphate + diphosphate. It carries out the reaction 1-hexadecanoyl-2-(5Z,8Z,11Z,14Z-eicosatetraenoyl)-sn-glycero-3-phosphate + CTP + H(+) = 1-hexadecanoyl-2-(5Z,8Z,11Z,14Z-eicosatetraenoyl)-sn-glycero-3-cytidine-5'-diphosphate + diphosphate. The catalysed reaction is 1,2-di-(5Z,8Z,11Z,14Z)-eicosatetraenoyl-sn-glycero-3-phosphate + CTP + H(+) = 1,2-di-(5Z,8Z,11Z,14Z-eicosatetraenoyl)-sn-glycero-3-cytidine-5'-diphosphate + diphosphate. The enzyme catalyses 1-octadecanoyl-2-(9Z-octadecenoyl)-sn-glycero-3-phosphate + CTP + H(+) = 1-octadecanoyl-2-(9Z-octadecenoyl)-sn-glycero-3-cytidine-5'-diphosphate + diphosphate. It catalyses the reaction 1-octadecanoyl-2-(4Z,7Z,10Z,13Z,16Z,19Z-docosahexaenoyl)-sn-glycero-3-phosphate + CTP + H(+) = 1-octadecanoyl-2-(4Z,7Z,10Z,13Z,16Z,19Z-docosahexaenoyl)-sn-glycero-3-cytidine-5'-diphosphate + diphosphate. It carries out the reaction 1,2-di-(9Z,12Z-octadecadienoyl)-sn-glycero-3-phosphate + CTP + H(+) = 1,2-di-(9Z,12Z-octadecadienoyl)-sn-glycero-3-cytidine-5'-diphosphate + diphosphate. The catalysed reaction is 1,2-di-(9Z-octadecenoyl)-sn-glycero-3-phosphate + CTP + H(+) = 1,2-di-(9Z-octadecenoyl)-sn-glycero-3-cytidine-5'-diphosphate + diphosphate. Its pathway is phospholipid metabolism; CDP-diacylglycerol biosynthesis; CDP-diacylglycerol from sn-glycerol 3-phosphate: step 3/3. Its activity is regulated as follows. Activated by GTP. Inhibited by CDP-diacylglycerol and by phosphatidylglycerol 4,5-bisphosphate (PPI2). In terms of biological role, catalyzes the conversion of phosphatidic acid (PA) to CDP-diacylglycerol (CDP-DAG), an essential intermediate in the synthesis of phosphatidylglycerol, cardiolipin and phosphatidylinositol. Exhibits almost no acyl chain preference for PA, showing no discrimination for the sn-1/sn-2 acyl chain composition of PAs. Plays an important role in regulatinng the growth of lipid droplets which are storage organelles at the center of lipid and energy homeostasis. Positively regulates the differentiation and development of adipocytes. This is Phosphatidate cytidylyltransferase 1 from Rattus norvegicus (Rat).